The sequence spans 171 residues: Protein BTG1 (171 aa).

Ser-159 is modified (phosphoserine).

Belongs to the BTG family. As to quaternary structure, interacts with CNOT7 and CNOT8.

Functionally, anti-proliferative protein. The protein is Protein BTG1 (BTG1) of Bos taurus (Bovine).